Reading from the N-terminus, the 387-residue chain is 1-deoxy-D-xylulose 5-phosphate reductoisomerase (387 aa).

Positions 10, 11, 12, 13, 36, 37, 38, and 123 each coordinate NADPH. Position 124 (lysine 124) interacts with 1-deoxy-D-xylulose 5-phosphate. Glutamate 125 lines the NADPH pocket. Aspartate 149 contributes to the Mn(2+) binding site. Residues serine 150, glutamate 151, serine 175, and histidine 198 each coordinate 1-deoxy-D-xylulose 5-phosphate. Mn(2+) is bound at residue glutamate 151. Glycine 204 is a binding site for NADPH. 1-deoxy-D-xylulose 5-phosphate is bound by residues serine 211, asparagine 216, lysine 217, and glutamate 220. Residue glutamate 220 participates in Mn(2+) binding.

The protein belongs to the DXR family. Mg(2+) is required as a cofactor. It depends on Mn(2+) as a cofactor.

The catalysed reaction is 2-C-methyl-D-erythritol 4-phosphate + NADP(+) = 1-deoxy-D-xylulose 5-phosphate + NADPH + H(+). It participates in isoprenoid biosynthesis; isopentenyl diphosphate biosynthesis via DXP pathway; isopentenyl diphosphate from 1-deoxy-D-xylulose 5-phosphate: step 1/6. Catalyzes the NADPH-dependent rearrangement and reduction of 1-deoxy-D-xylulose-5-phosphate (DXP) to 2-C-methyl-D-erythritol 4-phosphate (MEP). The polypeptide is 1-deoxy-D-xylulose 5-phosphate reductoisomerase (Pelotomaculum thermopropionicum (strain DSM 13744 / JCM 10971 / SI)).